The chain runs to 86 residues: MANIKSQKKRILTNEKARLRNKAVKSELRTVVRGFREALAAGDAEKAQAALALASKKLDKAVSKGVIHKNQAANRKSAIAKAAAKV.

Belongs to the bacterial ribosomal protein bS20 family.

Binds directly to 16S ribosomal RNA. This is Small ribosomal subunit protein bS20 from Kineococcus radiotolerans (strain ATCC BAA-149 / DSM 14245 / SRS30216).